Here is a 120-residue protein sequence, read N- to C-terminus: Large ribosomal subunit protein bL19 (120 aa).

The protein belongs to the bacterial ribosomal protein bL19 family.

Its function is as follows. This protein is located at the 30S-50S ribosomal subunit interface and may play a role in the structure and function of the aminoacyl-tRNA binding site. This Dichelobacter nodosus (strain VCS1703A) protein is Large ribosomal subunit protein bL19.